The primary structure comprises 220 residues: Cytidylate kinase (220 aa).

9–17 (GPAASGKST) is an ATP binding site.

The protein belongs to the cytidylate kinase family. Type 1 subfamily.

The protein localises to the cytoplasm. The enzyme catalyses CMP + ATP = CDP + ADP. It catalyses the reaction dCMP + ATP = dCDP + ADP. This Thermotoga sp. (strain RQ2) protein is Cytidylate kinase.